Here is a 674-residue protein sequence, read N- to C-terminus: DNA ligase (674 aa).

NAD(+) is bound by residues 34 to 38 (DSEYD), 83 to 84 (SL), and Glu114. Lys116 serves as the catalytic N6-AMP-lysine intermediate. Positions 137, 174, 290, and 314 each coordinate NAD(+). The Zn(2+) site is built by Cys405, Cys408, Cys424, and Cys429. The BRCT domain occupies 587–674 (QSGTQFDGKM…KLSLIENTKF (88 aa)).

This sequence belongs to the NAD-dependent DNA ligase family. LigA subfamily. It depends on Mg(2+) as a cofactor. Requires Mn(2+) as cofactor.

It catalyses the reaction NAD(+) + (deoxyribonucleotide)n-3'-hydroxyl + 5'-phospho-(deoxyribonucleotide)m = (deoxyribonucleotide)n+m + AMP + beta-nicotinamide D-nucleotide.. Functionally, DNA ligase that catalyzes the formation of phosphodiester linkages between 5'-phosphoryl and 3'-hydroxyl groups in double-stranded DNA using NAD as a coenzyme and as the energy source for the reaction. It is essential for DNA replication and repair of damaged DNA. This Endomicrobium trichonymphae protein is DNA ligase.